We begin with the raw amino-acid sequence, 315 residues long: MPRTKIPKNSKRNREVANREEKVRLYELKMDSRLISIDSLETKFLSAVDHQVKTLLGQVQKELANLKMPEVLRLFEELDRFSDFKASDQTQLLASMSMSGSAIEGHAPSATGSRNDEEDSSIGASGGSILAAHTGSLLRSTKAMRTPGPLHSARARRARRSRSACGDLNILHSAKPPSISSSSSSSRNSRSKLRTPMASRAKAFSADRTPLKQKQMRSGSPTTPPMAFLRYPKPGEVALSKYGSPMVAQVMPDKFANVNIPIRNGVLSLRPKKLDADEVESNLLENLDEDTLNQIKTLHENLQMIVNKASQAVFK.

2 disordered regions span residues 103–126 (IEGH…GASG) and 138–226 (LRST…TPPM). Phosphothreonine is present on Thr146. Ser152 carries the post-translational modification Phosphoserine. Over residues 153–162 (ARARRARRSR) the composition is skewed to basic residues. Ser163 bears the Phosphoserine mark. Low complexity predominate over residues 178 to 188 (SISSSSSSSRN). At Ser205 the chain carries Phosphoserine. Thr209 is subject to Phosphothreonine. Ser218, Ser220, and Ser244 each carry phosphoserine.

It belongs to the borealin family. In terms of assembly, component of the CPC complex. As to expression, ubiquitously expressed in the early embryo. Expression is restricted to the ventral nerve cord and brain during later embryonic stages.

It is found in the nucleus. The protein localises to the chromosome. It localises to the centromere. The protein resides in the cytoplasm. Its subcellular location is the cytoskeleton. It is found in the spindle. Functionally, component of the chromosomal passenger complex (CPC), a complex that acts as a key regulator of embryonic mitosis. The CPC complex has essential functions at the centromere for ensuring sister chromatid cohesion, recruitment of the CPC to kinetochores, and chromosome alignment and segregation. There is no function in meiotic histone phosphorylation or spindle formation. This Drosophila melanogaster (Fruit fly) protein is Borealin (borr).